We begin with the raw amino-acid sequence, 192 residues long: Protein GrpE (192 aa).

The segment at 1-41 (MSKEEFPHEKDLKDEVTPDKAPKKDPKAAPKEEVKENPVEN) is disordered.

It belongs to the GrpE family. As to quaternary structure, homodimer.

The protein localises to the cytoplasm. Its function is as follows. Participates actively in the response to hyperosmotic and heat shock by preventing the aggregation of stress-denatured proteins, in association with DnaK and GrpE. It is the nucleotide exchange factor for DnaK and may function as a thermosensor. Unfolded proteins bind initially to DnaJ; upon interaction with the DnaJ-bound protein, DnaK hydrolyzes its bound ATP, resulting in the formation of a stable complex. GrpE releases ADP from DnaK; ATP binding to DnaK triggers the release of the substrate protein, thus completing the reaction cycle. Several rounds of ATP-dependent interactions between DnaJ, DnaK and GrpE are required for fully efficient folding. This Lactobacillus johnsonii (strain CNCM I-12250 / La1 / NCC 533) protein is Protein GrpE.